The sequence spans 538 residues: MLSNNIIRQQLIHYGITDCCELIYNPSFEQLVREETNHNLTNLERGTITNSGAIAVNTGIFTGRSPLDKYIVCDNDTHHQLWWSDQDKTSNNQPISQITWQYLKKLVSKQLSYKRLFIIDVYCGAKKNSRLRVRFVTEVAWQAHFVKNMFIQPDAIDLISFEPEFIVLNGAKCTNPNWREQNMHSENFIALNLTEGMQLIAGTWYGGEMKKGLFTVMNYHLPLKGIASMHCSANVGINKDVALFFGLSGTGKTTLSHDTNRALIGDDEHGWDNDGIFNLEGGCYAKTINLKPELEPEIFQAIRCNALLENVMVRADGSVNYHDNSKTDNARVSYPLNHIKNRVQPVSCASHASTIIFLTADAFGVLPPVATLTNEQAQYYFLSGFSAKLSGTERGIISPVPTFSACFGAAFLALHPTVYAALLAKRMNIAGTNAYLVNTGWNGNGSRIALKDTKAIINAILNKQIQDTPTIKLPIFNLSIPQILIGVDSNILDPRTSYINSSEWQNKARSLAQLFIKNFNKFTLPLTCKKLHNAGPQL.

Residues Arg64, Tyr205, and Lys211 each contribute to the substrate site. ATP-binding positions include Lys211, His230, and 246–254; that span reads GLSGTGKTT. Lys211 and His230 together coordinate Mn(2+). Position 267 (Asp267) interacts with Mn(2+). ATP contacts are provided by residues Glu295, Arg331, 447-448, and Thr453; that span reads RI. Arg331 lines the substrate pocket.

Belongs to the phosphoenolpyruvate carboxykinase (ATP) family. As to quaternary structure, monomer. It depends on Mn(2+) as a cofactor.

Its subcellular location is the cytoplasm. It catalyses the reaction oxaloacetate + ATP = phosphoenolpyruvate + ADP + CO2. The protein operates within carbohydrate biosynthesis; gluconeogenesis. Its function is as follows. Involved in the gluconeogenesis. Catalyzes the conversion of oxaloacetate (OAA) to phosphoenolpyruvate (PEP) through direct phosphoryl transfer between the nucleoside triphosphate and OAA. This chain is Phosphoenolpyruvate carboxykinase (ATP), found in Baumannia cicadellinicola subsp. Homalodisca coagulata.